A 294-amino-acid chain; its full sequence is Nucleotide-binding protein LVIS_0651 (294 aa).

12–19 (GMSGAGKT) is a binding site for ATP. 62 to 65 (DLRS) serves as a coordination point for GTP.

It belongs to the RapZ-like family.

Functionally, displays ATPase and GTPase activities. This chain is Nucleotide-binding protein LVIS_0651, found in Levilactobacillus brevis (strain ATCC 367 / BCRC 12310 / CIP 105137 / JCM 1170 / LMG 11437 / NCIMB 947 / NCTC 947) (Lactobacillus brevis).